The following is a 199-amino-acid chain: GTP cyclohydrolase-2 (199 aa).

A GTP-binding site is contributed by 52 to 56; the sequence is RMHSE. Zn(2+)-binding residues include Cys57, Cys68, and Cys70. GTP is bound by residues Gln73, 94 to 96, and Thr116; that span reads EGR. Asp128 acts as the Proton acceptor in catalysis. Arg130 functions as the Nucleophile in the catalytic mechanism. GTP-binding residues include Thr151 and Lys156.

The protein belongs to the GTP cyclohydrolase II family. Requires Zn(2+) as cofactor.

The enzyme catalyses GTP + 4 H2O = 2,5-diamino-6-hydroxy-4-(5-phosphoribosylamino)-pyrimidine + formate + 2 phosphate + 3 H(+). The protein operates within cofactor biosynthesis; riboflavin biosynthesis; 5-amino-6-(D-ribitylamino)uracil from GTP: step 1/4. Functionally, catalyzes the conversion of GTP to 2,5-diamino-6-ribosylamino-4(3H)-pyrimidinone 5'-phosphate (DARP), formate and pyrophosphate. The protein is GTP cyclohydrolase-2 of Aliivibrio fischeri (strain ATCC 700601 / ES114) (Vibrio fischeri).